A 229-amino-acid chain; its full sequence is Cell division topological specificity factor homolog, chloroplastic (229 aa).

The N-terminal 30 residues, 1–30 (MAMSSGTLRISATLVSPYHHHHRNRLSLPS), are a transit peptide targeting the chloroplast. Residues 35 to 141 (VDFTGFISNG…KMILFSDRCD (107 aa)) form an interaction with MIND1 region. The interval 142–169 (VSDEAKRKIVNNIIHALSDFVEIESEEK) is homodimerization.

Belongs to the MinE family. As to quaternary structure, homodimer. Interacts with MIND1. These interactions are required for proper intraplastidic localization. Binds to ARC3. In terms of tissue distribution, expressed in green tissues, especially at the shoot apex. Also present in leaves, stems, buds, and flowers, especially in sepals, siliques (tip and base), and anthers (mostly in pollen grains).

Its subcellular location is the plastid. The protein localises to the chloroplast. Its function is as follows. Acts as a topological specificity factor during plastid division and specify plastid constriction sites (such as the Z-ring) in a MCD1-dependent manner. Especially involved in epidermal plastids division in a FTSZ1-dependent manner. Required for the proper formation of FtsZ rings at the division site in nongreen plastids (e.g. etioplasts). May contribute to gravitropism in stems and hypocotyls. Stimulates MIND1 ATPase activity. In cooperation with MIND1, prevents FtsZ ring formation anywhere outside of the mid-plastids. The chain is Cell division topological specificity factor homolog, chloroplastic from Arabidopsis thaliana (Mouse-ear cress).